We begin with the raw amino-acid sequence, 259 residues long: Probable ABC transporter permease protein RF_0080 (259 aa).

Transmembrane regions (helical) follow at residues 13–35 (TIKF…SSII), 49–69 (LFIG…SGAV), 148–168 (VIAA…IGVM), 195–215 (PIDV…ISII), and 237–257 (AVVN…ELFF).

Belongs to the MlaE permease family.

The protein localises to the cell inner membrane. Functionally, could be part of an ABC transporter complex. The protein is Probable ABC transporter permease protein RF_0080 of Rickettsia felis (strain ATCC VR-1525 / URRWXCal2) (Rickettsia azadi).